The chain runs to 511 residues: Membrane-bound lytic murein transglycosylase F (511 aa).

An N-terminal signal peptide occupies residues 1-19 (MKKLKINYLLIGIVTLLLA). A non-LT domain region spans residues 20-269 (AALWPSIPWS…RLEEKYLGHG (250 aa)). Residues 270-511 (NDFDYVDTRT…ARMKLPGHLY (242 aa)) are LT domain. The active site involves glutamate 314.

In the N-terminal section; belongs to the bacterial solute-binding protein 3 family. This sequence in the C-terminal section; belongs to the transglycosylase Slt family.

The protein resides in the cell outer membrane. It catalyses the reaction Exolytic cleavage of the (1-&gt;4)-beta-glycosidic linkage between N-acetylmuramic acid (MurNAc) and N-acetylglucosamine (GlcNAc) residues in peptidoglycan, from either the reducing or the non-reducing ends of the peptidoglycan chains, with concomitant formation of a 1,6-anhydrobond in the MurNAc residue.. Murein-degrading enzyme that degrades murein glycan strands and insoluble, high-molecular weight murein sacculi, with the concomitant formation of a 1,6-anhydromuramoyl product. Lytic transglycosylases (LTs) play an integral role in the metabolism of the peptidoglycan (PG) sacculus. Their lytic action creates space within the PG sacculus to allow for its expansion as well as for the insertion of various structures such as secretion systems and flagella. This is Membrane-bound lytic murein transglycosylase F from Klebsiella pneumoniae subsp. pneumoniae (strain ATCC 700721 / MGH 78578).